We begin with the raw amino-acid sequence, 460 residues long: MRPTRWRRSTHVAVGVAVLALVVAVVAAAALFTGKHSDAAEAVPPAPPPATADPGVVPVDLSAPTPTRRGLATALAAALANPDLGLITGRITDADTGAELWEQGARVPMQPASVNKVLTTAAALLTLDRDARLTTTVVAADDQPGLVVLRGGGDTTLSAAPKGTDTWYKGAARISDLADQVRARGIRVTRVRVDTSAYSGPTMAPGWDPADIDGGDIAPMESVMLDGGRTQPTTVESRRSKSPALDAGKALAAALGVEPESVTLMPSGMRGGTTIAEVQSAPLIERLRQMMNESDNVMAESIAREVAEALGRPQSFEGAVGAVLTQLRSVGIDTSGAKLVDSSGLSVDNRLTALTLDEVVNAAAGHTQPALRPLVDLLPIAGGSGTLSNRYLDTDAGRAAAGWLRAKTGSLTGTNALAGIVTDRSGRVLTFALISNNAGPTGRTAIDALAAVLRSCGCGA.

Positions 1–28 (MRPTRWRRSTHVAVGVAVLALVVAVVAA) are cleaved as a signal peptide. Residues 39 to 64 (AAEAVPPAPPPATADPGVVPVDLSAP) are disordered. Residue Ser113 is the Acyl-ester intermediate of the active site. The active-site Proton acceptor is Lys116. The active site involves Ser294.

The protein belongs to the peptidase S13 family.

In terms of biological role, carboxypeptidase that cleaves terminal D-alanine from peptidoglycan in the mycobacterial cell wall. May cleave L-Lys-D-Ala and/or D-Ala-D-Ala peptide bonds. Exerts important effects on mycobacterial cell morphology and cell division. The sequence is that of Carboxypeptidase DacB from Mycolicibacterium smegmatis (strain ATCC 700084 / mc(2)155) (Mycobacterium smegmatis).